The chain runs to 404 residues: MKGEVKKVVLAYSGGLDTSIILRWLQDQYQCEVVTFTADLGQGEELEPARAKARLMGIKEENIFIDDLREEFVRDFVFPMFRANALYEGVYLLGTSIARPLISKRQIEIANMVGADAVSHGATGKGNDQVRFEMGYYALKPDIKVIAPWRLWDLTSRTKLLDFAEKHQIPIAKDKRGEAPYSTDANLLHISYEGKALEDPWVEPFEDMYTRSVAPENAPDKPTYIEIEFEKGDAVAIDGVRLSPAALLTKLNELGGANGIGRLDLVENRFVGMKSRGVYETPGGSVLIVAHRAMESLTLDRGESHLKDELMPRYAELIYNGFWFAPERIAIQTMIDKVSENVSGTVRLKLFKGVASVVGRKSPKSLYRMDYVTFEEDSVYDQRDAQGFIKLNALRMRLAKMARG.

Residues alanine 11–serine 19 and alanine 38 contribute to the ATP site. Residues tyrosine 91 and serine 96 each contribute to the L-citrulline site. Glycine 121 is an ATP binding site. L-aspartate contacts are provided by threonine 123, asparagine 127, and aspartate 128. Asparagine 127 serves as a coordination point for L-citrulline. Residues arginine 131, serine 182, serine 191, glutamate 267, and tyrosine 279 each coordinate L-citrulline.

Belongs to the argininosuccinate synthase family. Type 1 subfamily. As to quaternary structure, homotetramer.

It localises to the cytoplasm. It carries out the reaction L-citrulline + L-aspartate + ATP = 2-(N(omega)-L-arginino)succinate + AMP + diphosphate + H(+). It participates in amino-acid biosynthesis; L-arginine biosynthesis; L-arginine from L-ornithine and carbamoyl phosphate: step 2/3. The chain is Argininosuccinate synthase from Paramagnetospirillum magneticum (strain ATCC 700264 / AMB-1) (Magnetospirillum magneticum).